The primary structure comprises 117 residues: Small ribosomal subunit protein uS19c (117 aa).

Belongs to the universal ribosomal protein uS19 family.

It localises to the plastid. In terms of biological role, protein S19 forms a complex with S13 that binds strongly to the 16S ribosomal RNA. In Helicosporidium sp. subsp. Simulium jonesii (Green alga), this protein is Small ribosomal subunit protein uS19c (rps19).